A 493-amino-acid chain; its full sequence is tRNA (uracil-5-)-methyltransferase homolog B (493 aa).

The N-terminal 14 residues, 1-14, are a transit peptide targeting the mitochondrion; the sequence is MHNPRLFLSRAGFF. Residues Gln312, Glu362, and Asn412 each coordinate S-adenosyl-L-methionine. Cys440 functions as the Nucleophile in the catalytic mechanism. Glu486 functions as the Proton acceptor in the catalytic mechanism.

The protein belongs to the class I-like SAM-binding methyltransferase superfamily. RNA M5U methyltransferase family.

It localises to the mitochondrion matrix. The enzyme catalyses uridine(54) in tRNA + S-adenosyl-L-methionine = 5-methyluridine(54) in tRNA + S-adenosyl-L-homocysteine + H(+). It carries out the reaction a uridine in 12S rRNA + S-adenosyl-L-methionine = a 5-methyluridine in 12S rRNA + S-adenosyl-L-homocysteine + H(+). Mitochondrial S-adenosyl-L-methionine-dependent methyltransferase that catalyzes the formation of 5-methyl-uridine in tRNAs and 12S rRNA. Catalyzes the methylation of uridine at position 54 (m5U54) in all tRNAs. Specifically methylates the uridine in position 425 of 12S rRNA (m5U425). Does not affect RNA stability or mitochondrial translation. The polypeptide is tRNA (uracil-5-)-methyltransferase homolog B (Mus musculus (Mouse)).